The primary structure comprises 258 residues: uncharacterized protein (258 aa).

This is an uncharacterized protein from Methanocaldococcus jannaschii (strain ATCC 43067 / DSM 2661 / JAL-1 / JCM 10045 / NBRC 100440) (Methanococcus jannaschii).